We begin with the raw amino-acid sequence, 989 residues long: Serine-repeat antigen protein 5 (989 aa).

The first 16 residues, 1–16, serve as a signal peptide directing secretion; sequence MKSYISLFFILCVIFN. Disordered stretches follow at residues 26–91 and 165–245; these read SQTG…EKQD and LPSN…RNLQ. Low complexity-rich tracts occupy residues 52–87, 167–180, and 191–225; these read QGST…STSS, SNGT…STGT, and SSSS…SSSS. A Phosphoserine modification is found at Ser167. The N-linked (GlcNAc...) asparagine glycan is linked to Asn168. The tract at residues 208–245 is interaction with PTKL; the sequence is SSSSSSSSSSSSSSSSSSESLPANGPDSPTVKPPRNLQ. Residue Asn310 is glycosylated (N-linked (GlcNAc...) asparagine). The interaction with host VTN stretch occupies residues 365–382; that stretch reads YKYLSEDIVSNFKEIKAE. Cysteines 437 and 489 form a disulfide. Thr541 is subject to Phosphothreonine. Disulfide bonds link Cys559–Cys564, Cys573–Cys602, Cys585–Cys628, Cys619–Cys664, and Cys747–Cys801. The thiol-protease-like stretch occupies residues 571–989; the sequence is NNCISNLQVE…TNNECYFCYV (419 aa). Catalysis depends on residues His754 and Asn779. N-linked (GlcNAc...) asparagine glycosylation is present at Asn820. A propeptide spans 835 to 878 (inhibition peptide); it reads KASPEFYHNLYFKNFNVGKKNLFSEKEDNENNKKLGNNYIIFGQ. Ser858 is modified (phosphoserine).

This sequence belongs to the peptidase C1 family. In terms of assembly, may interact (via C-terminus) with PTKL (via SAM domain). Interacts (via C-terminus) with human VTN (via hemopexin repeat 2); may form heterotetramers of two VTN and SERA5 P47 heterodimers; the interaction may protect merozoites from phagocytosis by host monocytes; VTN glycosylation appears to be dispensable for the interaction. As to quaternary structure, monomer. Interacts with kinase CPK1/CDPK1 at the schizont stage. Phosphorylation by CPK1/CDPK1 increases SERA5 protease activity towards a synthetic peptide in vitro. In terms of processing, just prior to merozoite egress from host erythrocytes, proteolytically cleaved into multiple fragments. Cleaved by SUB1 into p47 and p73, p73 is further cleaved by SUB1 into p56 and p18 and p56 is further processed into p50 by an unidentified protease. p47 remains covalently associated with p18 via disulfide bond. p47 can be processed into p25n and p25c by SUB1. p25c and p25n remain associated with p18. Proteolytic processing is essential for merozoite egress from host erythrocytes. The cleavage of the propeptide to produce p50 is necessary for protease activity and to promote merozoite egress.

The protein resides in the parasitophorous vacuole. The protein localises to the secreted. It is found in the cell membrane. Functionally, plays an essential role during the asexual blood stage development by controlling the kinetics of merozoite egress from host erythrocytes. Specifically, prevents premature rupture of the parasitophorous vacuole and host erythrocyte membranes. Its function is as follows. May prevent merozoite phagocytosis by host monocytes via interaction with host VTN at the merozoite surface. Plays a role in parasite growth. Protease activity is controversial. In Plasmodium falciparum (isolate CDC / Honduras), this protein is Serine-repeat antigen protein 5.